A 141-amino-acid polypeptide reads, in one-letter code: Putative pre-16S rRNA nuclease (141 aa).

The protein belongs to the YqgF nuclease family.

The protein localises to the cytoplasm. Functionally, could be a nuclease involved in processing of the 5'-end of pre-16S rRNA. The polypeptide is Putative pre-16S rRNA nuclease (Acetivibrio thermocellus (strain ATCC 27405 / DSM 1237 / JCM 9322 / NBRC 103400 / NCIMB 10682 / NRRL B-4536 / VPI 7372) (Clostridium thermocellum)).